The chain runs to 580 residues: Transcription factor coe2-B (580 aa).

The interaction with DNA stretch occupies residues 60-63 (RKSN). The C5-type zinc-finger motif lies at 148–167 (CRVLLTHEVMCSRCCEKKSC). Interaction with DNA stretches follow at residues 194 to 201 (NCLKTAGN) and 233 to 236 (NNSK). Residues 259-341 (PCIKAISPSE…CKGAPGRFIY (83 aa)) form the IPT/TIG domain. Positions 455 to 492 (IRNTSSISPRGYSSSSTPQQSNYSTPSNSMNGYSNVPM) are disordered. Over residues 459-481 (SSISPRGYSSSSTPQQSNYSTPS) the composition is skewed to low complexity. Over residues 482–492 (NSMNGYSNVPM) the composition is skewed to polar residues.

Belongs to the COE family. As to expression, in embryos, expressed in precursors of primary neurons. In adults, expressed at high levels in the brain, and at low levels in the somatic muscles, testis, and possibly the spleen.

The protein localises to the nucleus. Functionally, may play a pivotal role in the transcriptional cascade that specifies primary neurons in embryos. Stabilizes the higher neural potential of selected progenitor cells that express neurog2/X-ngnr-1 by maintaining Delta-Notch signaling. Thus ensures the transition between neural competence and irreversible commitment to a neural fate. Also promotes neuronal differentiation by activating neurod1 expression, directly or indirectly. In Xenopus laevis (African clawed frog), this protein is Transcription factor coe2-B.